The primary structure comprises 237 residues: N-alpha-acetyltransferase 40 (237 aa).

Residue Gly2 is the site of N-myristoyl glycine attachment. Residues 63–216 (TALSPDTVEW…EDCSYEILSR (154 aa)) enclose the N-acetyltransferase domain. Residues Tyr85, 127 to 129 (DVE), and Tyr138 each bind substrate. Residues 140 to 142 (VQL) and 148 to 153 (RKGLGK) each bind acetyl-CoA. A substrate-binding site is contributed by Thr174. Acetyl-CoA is bound at residue Asn179. A substrate-binding site is contributed by Tyr211.

It belongs to the acetyltransferase family. NAA40 subfamily.

The protein resides in the cytoplasm. The protein localises to the nucleus. The catalysed reaction is N-terminal L-seryl-[histone H4] + acetyl-CoA = N-terminal N(alpha)-acetyl-L-seryl-[histone H4] + CoA + H(+). The enzyme catalyses N-terminal L-seryl-[histone H2A] + acetyl-CoA = N-terminal N(alpha)-acetyl-L-seryl-[histone H2A] + CoA + H(+). N-alpha-acetyltransferase that specifically mediates the acetylation of the N-terminal residues of histones H4 and H2A. In contrast to other N-alpha-acetyltransferase, has a very specific selectivity for histones H4 and H2A N-terminus and specifically recognizes the 'Ser-Gly-Arg-Gly sequence'. In Danio rerio (Zebrafish), this protein is N-alpha-acetyltransferase 40 (naa40).